A 372-amino-acid chain; its full sequence is Glutamate 5-kinase (372 aa).

Residue Lys14 coordinates ATP. 3 residues coordinate substrate: Ser54, Asp141, and Asn153. Residue Thr173–Asp174 participates in ATP binding. The 79-residue stretch at Arg280–Met358 folds into the PUA domain.

The protein belongs to the glutamate 5-kinase family.

The protein resides in the cytoplasm. It catalyses the reaction L-glutamate + ATP = L-glutamyl 5-phosphate + ADP. It functions in the pathway amino-acid biosynthesis; L-proline biosynthesis; L-glutamate 5-semialdehyde from L-glutamate: step 1/2. In terms of biological role, catalyzes the transfer of a phosphate group to glutamate to form L-glutamate 5-phosphate. This Paraburkholderia xenovorans (strain LB400) protein is Glutamate 5-kinase.